A 2475-amino-acid chain; its full sequence is Polyprotein pp220 (2475 aa).

Residue G2 is the site of N-myristoyl glycine; by host attachment. Residues 2184-2211 are a coiled coil; sequence RNQIIGELNAFRTQLEDTRREVNNLIQT.

This sequence belongs to the asfivirus polyprotein pp220 family. Post-translationally, the polyprotein is not glycosylated. Specific enzymatic cleavages in vivo by the viral pS273R protease yield mature proteins.

It is found in the host cytoplasm. The protein resides in the host perinuclear region. It localises to the virion. The protein localises to the host nucleus. Functionally, essential for the core assembly. Its myristoyl moiety may function as a membrane-anchoring signal to bind the developing core shell to the inner viral envelope. Its function is as follows. The structural protein p34 is a component of the virus core shell. The structural protein p14 is a component of the virus core shell. In terms of biological role, the structural protein p37 is a component of the virus core shell. Functionally, the structural protein p150 is a component of the virus core shell. This African swine fever virus (isolate Warthog/Namibia/Wart80/1980) (ASFV) protein is Polyprotein pp220.